Here is a 362-residue protein sequence, read N- to C-terminus: Patr class I histocompatibility antigen, B-2 alpha chain (362 aa).

An N-terminal signal peptide occupies residues 1 to 24 (MQVTAPRTVLLLLSAALALTETWA). Residues 25-114 (GSHSMKYFYT…LRGYYNQSEA (90 aa)) are alpha-1. Topologically, residues 25 to 308 (GSHSMKYFYT…EPSSQSTIPI (284 aa)) are extracellular. The N-linked (GlcNAc...) asparagine glycan is linked to asparagine 110. The tract at residues 115 to 206 (GSHIIQRMYG…ENGKETLQRA (92 aa)) is alpha-2. Cystine bridges form between cysteine 125/cysteine 188 and cysteine 227/cysteine 283. An alpha-3 region spans residues 207-298 (DPPKTHVTHH…GLPKPLTLRW (92 aa)). The Ig-like C1-type domain occupies 209 to 295 (PKTHVTHHPI…QHEGLPKPLT (87 aa)). Residues 299-308 (EPSSQSTIPI) form a connecting peptide region. A helical transmembrane segment spans residues 309 to 332 (VGIVAGLAVLAVVVIGAVVAAVMC). The Cytoplasmic portion of the chain corresponds to 333-362 (RRKSSGGKGGSYSQAASSDSAQGSDVSLTA). The disordered stretch occupies residues 336–362 (SSGGKGGSYSQAASSDSAQGSDVSLTA). Over residues 343–362 (SYSQAASSDSAQGSDVSLTA) the composition is skewed to low complexity.

It belongs to the MHC class I family. Heterodimer of an alpha chain and a beta chain (beta-2-microglobulin).

The protein resides in the membrane. In terms of biological role, involved in the presentation of foreign antigens to the immune system. The polypeptide is Patr class I histocompatibility antigen, B-2 alpha chain (Pan troglodytes (Chimpanzee)).